The primary structure comprises 347 residues: Monopolin complex subunit LRS4 (347 aa).

Residues 46-118 adopt a coiled-coil conformation; it reads KKVVDETLFL…QISVDKHNKE (73 aa). Over residues 112–130 the composition is skewed to basic and acidic residues; that stretch reads VDKHNKERTPSTGRDEQQR. 2 disordered regions span residues 112 to 183 and 208 to 230; these read VDKH…SLLS and RNDT…LQKS. Polar residues-rich tracts occupy residues 131–140 and 155–172; these read NSKAAHTSKP and NNQT…PTSQ. 2 positions are modified to phosphoserine: Ser168 and Ser230.

In terms of assembly, component of the monopolin complex composed of at least CSM1, LRS4 and MAM1. The complex associates with the kinetochore. In terms of processing, phosphorylated by CDC5. This phosphorylation is required for the location to the kinetochores during late pachytene.

The protein resides in the nucleus. The protein localises to the nucleolus. It localises to the chromosome. Its subcellular location is the centromere. In terms of biological role, component of the monopolin complex which promotes monoorientation during meiosis I, required for chromosome segregation during meiosis. Involved in rDNA silencing. The chain is Monopolin complex subunit LRS4 (LRS4) from Saccharomyces cerevisiae (strain ATCC 204508 / S288c) (Baker's yeast).